Here is a 127-residue protein sequence, read N- to C-terminus: uncharacterized protein (127 aa).

The region spanning methionine 1 to lysine 127 is the VOC domain.

Belongs to the glyoxalase I family.

This is an uncharacterized protein from Bacillus subtilis (strain 168).